Consider the following 234-residue polypeptide: MTKISKRMKSLSAKVEDKSYAPLEAIQLVKENANAKFDETIEAHIRLGIDPKYTDQQIRTTVSLPKGTGQKVRIAVIAKGEKVAEANSAGADLAGEEELIDSISKGEMNFDLLISTPDMMPKVAKLGRVLGPRGLMPNPKAGTVTTDLISSIKEFKAGKLEFRADRAGIVHVRFGKASFSPEDLLENLKVLHEAIDRNKPSGAKGRYWKSLYITSTMGPSVEIDIAALQDSKEE.

This sequence belongs to the universal ribosomal protein uL1 family. In terms of assembly, part of the 50S ribosomal subunit.

Binds directly to 23S rRNA. The L1 stalk is quite mobile in the ribosome, and is involved in E site tRNA release. Functionally, protein L1 is also a translational repressor protein, it controls the translation of the L11 operon by binding to its mRNA. The sequence is that of Large ribosomal subunit protein uL1 from Prochlorococcus marinus (strain SARG / CCMP1375 / SS120).